Consider the following 129-residue polypeptide: UPF0102 protein amb4503 (129 aa).

This sequence belongs to the UPF0102 family.

This chain is UPF0102 protein amb4503, found in Paramagnetospirillum magneticum (strain ATCC 700264 / AMB-1) (Magnetospirillum magneticum).